An 85-amino-acid chain; its full sequence is Putative defensin-like protein 79 (85 aa).

An N-terminal signal peptide occupies residues 1–31; the sequence is MKSEKSADAYGTYFLLISTIFLLFIARQASS. Cystine bridges form between Cys-37–Cys-69, Cys-44–Cys-60, Cys-47–Cys-67, and Cys-51–Cys-68.

This sequence belongs to the DEFL family.

The protein resides in the secreted. This is Putative defensin-like protein 79 from Arabidopsis thaliana (Mouse-ear cress).